A 178-amino-acid polypeptide reads, in one-letter code: Peptide methionine sulfoxide reductase MsrA (178 aa).

C14 is an active-site residue.

This sequence belongs to the MsrA Met sulfoxide reductase family.

The catalysed reaction is L-methionyl-[protein] + [thioredoxin]-disulfide + H2O = L-methionyl-(S)-S-oxide-[protein] + [thioredoxin]-dithiol. It carries out the reaction [thioredoxin]-disulfide + L-methionine + H2O = L-methionine (S)-S-oxide + [thioredoxin]-dithiol. Has an important function as a repair enzyme for proteins that have been inactivated by oxidation. Catalyzes the reversible oxidation-reduction of methionine sulfoxide in proteins to methionine. This chain is Peptide methionine sulfoxide reductase MsrA, found in Bacillus pumilus (strain SAFR-032).